A 478-amino-acid polypeptide reads, in one-letter code: Divinyl ether synthase CYP74D2 (478 aa).

C431 is a heme binding site.

Belongs to the cytochrome P450 family. 9-divinyl ether synthase subfamily. As to expression, expressed in roots.

It catalyses the reaction (9S)-hydroperoxy-(10E,12Z)-octadecadienoate = colneleate + H2O. The catalysed reaction is (9S)-hydroperoxy-(10E,12Z,15Z)-octadecatrienoate = colnelenate + H2O. Its function is as follows. Involved in the biosynthesis of the anti-fungal and antibacterial toxins colneleate and colnelenate. Can use (9S)-hydroperoxy-(10E,12Z)-octadecadienoate (9-HPOD) and (9S)-hydroperoxy-(10E,12Z,15Z)-octadecatrienoate (9-HPOT) as substrates but has no activity with the corresponding 13-hydroperoxides (13-HPOD and 13-HPOT). The polypeptide is Divinyl ether synthase CYP74D2 (Solanum tuberosum (Potato)).